The primary structure comprises 121 residues: Protein yippee (121 aa).

The Yippee domain maps to 13-110; it reads KLFNCAQCHT…LEYALITEAE (98 aa). The Zn(2+) site is built by Cys17, Cys20, Cys73, and Cys76.

The protein belongs to the yippee family. As to quaternary structure, interacts with hemolin.

The protein is Protein yippee of Drosophila melanogaster (Fruit fly).